The primary structure comprises 295 residues: Glucose-1-phosphate thymidylyltransferase (295 aa).

Mg(2+)-binding residues include Asp111 and Asp226.

The protein belongs to the glucose-1-phosphate thymidylyltransferase family. Homotetramer. The cofactor is Mg(2+).

The catalysed reaction is dTTP + alpha-D-glucose 1-phosphate + H(+) = dTDP-alpha-D-glucose + diphosphate. It participates in carbohydrate biosynthesis; dTDP-L-rhamnose biosynthesis. The protein operates within bacterial outer membrane biogenesis; LPS O-antigen biosynthesis. Functionally, catalyzes the formation of dTDP-glucose, from dTTP and glucose 1-phosphate, as well as its pyrophosphorolysis. This chain is Glucose-1-phosphate thymidylyltransferase (rmlA), found in Xanthomonas campestris pv. campestris (strain B100).